The sequence spans 28 residues: Potassium channel toxin alpha-KTx 9.7 (28 aa).

3 disulfides stabilise this stretch: C3–C19, C6–C24, and C10–C26.

Expressed by the venom gland.

Its subcellular location is the secreted. In terms of biological role, calcium channel activator. Rapidly and reversibly activates ryanodine receptor 1 (RYR1). This is Potassium channel toxin alpha-KTx 9.7 from Hottentotta judaicus (Black scorpion).